The chain runs to 332 residues: Invasin IpaD (332 aa).

Low complexity predominate over residues 1–25; the sequence is MNITTLTNSISTSSFSPNNTNGSST. A disordered region spans residues 1–43; it reads MNITTLTNSISTSSFSPNNTNGSSTETVNSDIKTTTSSHPVSS. Residues 26–43 are compositionally biased toward polar residues; sequence ETVNSDIKTTTSSHPVSS. Residues 44–77 are a coiled coil; it reads LTMLNDTLHNIRTTNQALKKELSQKTLTKTSLEE. Residues 192–267 form an ipaB binding region; that stretch reads VNSLKKALEE…KSLDNLGGNG (76 aa).

This sequence belongs to the invasin protein D family.

The protein resides in the secreted. Its function is as follows. Required for bacterial invasion of host cells. Controls IpaB and IpaC secretion, and the efficiency with which they are physically inserted into target cell membranes. These proteins are exported via T3SS to form a pore in the host membrane that allows the translocation of the other effectors into the host cytoplasm. Along with IpaB, is essential for both blocking secretion through the Mxi/Spa translocon in the absence of a secretion-inducing signal, and for controlling the level of secretion in the presence of this signal. This chain is Invasin IpaD (ipaD), found in Shigella flexneri.